A 472-amino-acid polypeptide reads, in one-letter code: Argininosuccinate lyase (472 aa).

This sequence belongs to the lyase 1 family. Argininosuccinate lyase subfamily.

It is found in the cytoplasm. It catalyses the reaction 2-(N(omega)-L-arginino)succinate = fumarate + L-arginine. It participates in amino-acid biosynthesis; L-arginine biosynthesis; L-arginine from L-ornithine and carbamoyl phosphate: step 3/3. The chain is Argininosuccinate lyase from Polynucleobacter necessarius subsp. necessarius (strain STIR1).